Reading from the N-terminus, the 166-residue chain is Large ribosomal subunit protein uL10 (166 aa).

This sequence belongs to the universal ribosomal protein uL10 family. In terms of assembly, part of the ribosomal stalk of the 50S ribosomal subunit. The N-terminus interacts with L11 and the large rRNA to form the base of the stalk. The C-terminus forms an elongated spine to which L12 dimers bind in a sequential fashion forming a multimeric L10(L12)X complex.

Forms part of the ribosomal stalk, playing a central role in the interaction of the ribosome with GTP-bound translation factors. This is Large ribosomal subunit protein uL10 from Pseudomonas fluorescens (strain Pf0-1).